Reading from the N-terminus, the 130-residue chain is Large ribosomal subunit protein bL19 (130 aa).

This sequence belongs to the bacterial ribosomal protein bL19 family.

In terms of biological role, this protein is located at the 30S-50S ribosomal subunit interface and may play a role in the structure and function of the aminoacyl-tRNA binding site. This Gluconobacter oxydans (strain 621H) (Gluconobacter suboxydans) protein is Large ribosomal subunit protein bL19.